Here is a 254-residue protein sequence, read N- to C-terminus: HLA class II histocompatibility antigen, DR alpha chain (254 aa).

A signal peptide spans Met1–Ala25. The tract at residues Ile26 to Asn109 is alpha-1. Over Ile26–Glu216 the chain is Extracellular. Asn103 and Asn143 each carry an N-linked (GlcNAc...) asparagine glycan. An alpha-2 region spans residues Val110–Trp203. The Ig-like C1-type domain occupies Pro112 to Glu204. Cys132 and Cys188 are joined by a disulfide. Positions Glu204–Glu216 are connecting peptide. Residues Asn217–Ile239 traverse the membrane as a helical segment. At Lys240–Leu254 the chain is on the cytoplasmic side. Residue Lys244 forms a Glycyl lysine isopeptide (Lys-Gly) (interchain with G-Cter in ubiquitin) linkage.

The protein belongs to the MHC class II family. Heterotrimer that consists of an alpha chain HLA-DRA, a beta chain HLA-DRB and a peptide (peptide-MHCII). Newly synthesized alpha and beta chains forms a heterodimer (MHCII) that associates with the CD74/invariant chain (Ii) in the endoplasmic reticulum (ER). Ii is a trimer composed of three subunits and each subunit interacts with one MHCII dimer, blocking the peptide-binding cleft. As a result, MHCII molecules cannot bind peptides present in the ER. The complex of MHCII and CD74/Ii is transported in vesicles from ER to Golgi to lysosomes, where it encounters antigenic peptides generated via proteolysis of endocytosed antigens. MHCII dimers are dissociated from CD74/Ii by the combined action of proteolysis and HLA-DM. Lysosomal enzymes such as cathepsin, degrade CD74/Ii leaving a 24 amino acid remnant called class II-associated Ii or CLIP. Interacts (via the peptide binding cleft) with CLIP; this interaction inhibits antigen peptide binding before entry in the endosomal compartment. The displacement of CLIP and replacement by a high affinity peptide in lysosomes is performed by HLA-DM heterodimer. HLA-DM catalyzes CLIP dissociation from MHCII, stabilizes empty MHCII and mediates the selection of high affinity peptides. Interacts with HLA-DM heterodimer; this interaction is direct. Interacts (via alpha-1 domain) with TCR (via CDRs). Interacts (via alpha-2 domain) with CD4 (via Ig-like V-type domain); this interaction increases the affinity of TCR for peptide-MHCII. In terms of assembly, (Microbial infection) Interacts with Epstein-Barr virus BZLF2/gp42. As to quaternary structure, (Microbial infection) Interacts with Staphylococcus aureus enterotoxin A/entA, enterotoxin B/entB, enterotoxin C1/entC1, enterotoxin D/entD, and enterotoxin H/entH. Ubiquitinated by MARCHF1 or MARCHF8 at Lys-244 leading to down-regulation of MHCII. When associated with ubiquitination of the beta chain at 'Lys-254', the down-regulation of MHCII may be highly effective. In terms of tissue distribution, expressed in professional APCs: macrophages, dendritic cells and B cells (at protein level). Expressed in thymic epithelial cells (at protein level).

It localises to the cell membrane. Its subcellular location is the endoplasmic reticulum membrane. It is found in the early endosome membrane. The protein localises to the late endosome membrane. The protein resides in the lysosome membrane. It localises to the autolysosome membrane. Functionally, an alpha chain of antigen-presenting major histocompatibility complex class II (MHCII) molecule. In complex with the beta chain HLA-DRB, displays antigenic peptides on professional antigen presenting cells (APCs) for recognition by alpha-beta T cell receptor (TCR) on HLA-DR-restricted CD4-positive T cells. This guides antigen-specific T-helper effector functions, both antibody-mediated immune response and macrophage activation, to ultimately eliminate the infectious agents and transformed cells. Typically presents extracellular peptide antigens of 10 to 30 amino acids that arise from proteolysis of endocytosed antigens in lysosomes. In the tumor microenvironment, presents antigenic peptides that are primarily generated in tumor-resident APCs likely via phagocytosis of apoptotic tumor cells or macropinocytosis of secreted tumor proteins. Presents peptides derived from intracellular proteins that are trapped in autolysosomes after macroautophagy, a mechanism especially relevant for T cell selection in the thymus and central immune tolerance. The selection of the immunodominant epitopes follows two processing modes: 'bind first, cut/trim later' for pathogen-derived antigenic peptides and 'cut first, bind later' for autoantigens/self-peptides. The anchor residue at position 1 of the peptide N-terminus, usually a large hydrophobic residue, is essential for high affinity interaction with MHCII molecules. The chain is HLA class II histocompatibility antigen, DR alpha chain (HLA-DRA) from Homo sapiens (Human).